The sequence spans 315 residues: Peroxidase 4 (315 aa).

Positions 1–19 (MAIFKILVLLLSLCCFSQA) are cleaved as a signal peptide. Gln-20 carries the post-translational modification Pyrrolidone carboxylic acid. Cystine bridges form between Cys-30–Cys-110, Cys-63–Cys-68, Cys-116–Cys-311, and Cys-195–Cys-221. His-61 (proton acceptor) is an active-site residue. Ca(2+) contacts are provided by Asp-62, Val-65, Gly-67, Asp-69, and Ser-71. Substrate is bound at residue Pro-158. His-188 provides a ligand contact to heme b. Residue Thr-189 coordinates Ca(2+). An N-linked (GlcNAc...) asparagine glycan is attached at Asn-205. The Ca(2+) site is built by Asp-234, Thr-237, and Asp-242.

This sequence belongs to the peroxidase family. Classical plant (class III) peroxidase subfamily. Heme b is required as a cofactor. Requires Ca(2+) as cofactor.

The protein resides in the secreted. It catalyses the reaction 2 a phenolic donor + H2O2 = 2 a phenolic radical donor + 2 H2O. Removal of H(2)O(2), oxidation of toxic reductants, biosynthesis and degradation of lignin, suberization, auxin catabolism, response to environmental stresses such as wounding, pathogen attack and oxidative stress. These functions might be dependent on each isozyme/isoform in each plant tissue. This Arabidopsis thaliana (Mouse-ear cress) protein is Peroxidase 4 (PER4).